The chain runs to 785 residues: Uncoating factor OPG117 (785 aa).

The protein belongs to the orthopoxvirus OPG117 family. As to quaternary structure, homomultimer; hexamer. Interacts with OPG148.

Its subcellular location is the host cytoplasm. In terms of biological role, multifunctional protein required for genome uncoating and replication. Major viral uncoating protein that is required for the release of the viral genome from incoming viral cores containing the viral DNA genome. Possesses an ATPase activity that is required for hexamerization and uncoating. The protein is Uncoating factor OPG117 (OPG117) of Cynomys gunnisoni (Gunnison's prairie dog).